Reading from the N-terminus, the 111-residue chain is Universal stress protein B (111 aa).

2 helical membrane-spanning segments follow: residues 1–21 (MIST…NMAR) and 90–110 (FILT…LLIW).

Belongs to the universal stress protein B family.

It localises to the cell inner membrane. This is Universal stress protein B from Enterobacter sp. (strain 638).